A 1045-amino-acid chain; its full sequence is Protein madd-4 (1045 aa).

Positions 1-23 (MKCSYTVVFLLFYLLIASFHVDA) are cleaved as a signal peptide. TSP type-1 domains follow at residues 24 to 71 (LSWA…KTCE), 236 to 292 (RCRW…NCVS), 294 to 510 (SCGR…HPCP), 512 to 572 (FWLT…NVVA), and 576 to 635 (TWVT…GSCS). Cystine bridges form between Cys35–Cys65, Cys39–Cys70, and Cys50–Cys55. Residues Asn268 and Asn280 are each glycosylated (N-linked (GlcNAc...) asparagine). In terms of domain architecture, Ig-like C2-type spans 637 to 732 (PELLSNRVFE…FTDRLQGNVT (96 aa)). Cys674 and Cys722 are disulfide-bonded. Residues Asn730 and Asn781 are each glycosylated (N-linked (GlcNAc...) asparagine). The region spanning 811–873 (RWDIGHWSEC…TRPCHREDCP (63 aa)) is the TSP type-1 6 domain. 2 N-linked (GlcNAc...) asparagine glycosylation sites follow: Asn899 and Asn906. The TSP type-1 7 domain maps to 932–990 (CKAEWRTSDWGSCSSECGTGGVQLRLLSCVWISSGRPAGRNCEQMRRPHSARACVADEP). The PLAC domain maps to 1004 to 1041 (RDASCQDQSRFCDIIKLFHSCDSLEVRQKCCSTCTFVE).

In terms of assembly, interacts with eva-1 (via the SUEL-type lectin domain). Interacts with unc-5. Interacts with unc-40; the interaction is required for the localization of unc-40 to postsynaptic domains. Isoform a forms homodimers and heterodimers with isoform b. Isoform b forms homodimers and heterodimers with isoform a. Isoform b interacts with nlg-1 (via extracellular domain); the interaction is required for nlg-1 localization to postsynaptic domains. Isoform b interacts (via the Ig-like C2-type domain) with nrx-1 (via C-terminus). Isoform a: Expressed in the commissural GABAergic and cholinergic motor neurons in the first larval stage but only in the cholinergic motor neurons in later larval stages and in adult animals. At the L1 larval stage, mainly localized at the nerve ring and at the dorsal cord. Isoform b: Expressed in the commissural GABAergic and cholinergic motor neurons whose cell bodies reside in the ventral nerve cord and which extend axons into the ventral and dorsal nerve cord. Also expressed in the head neurons RIA, RIC, lateral IL1s, lateral IL2s, OLLs, RMEs and SABs, all of which extend axons into the nerve ring. Expressed in the embryogenic blast cells and the corresponding terminally differentiated ventral cord motor neurons and head neurons.

Its subcellular location is the cell projection. The protein resides in the axon. It is found in the secreted. The protein localises to the synapse. It localises to the extracellular space. Its subcellular location is the extracellular matrix. In terms of biological role, component of an extracellular matrix cue that is involved in the guidance of dorsoventral midline migrations and in the specification of postsynaptic domains at neuromuscular junctions (NMJs). Acts as a ligand for the netrin receptor unc-40 and the neuroligin receptor nlg-1. Secreted by the dorsal and ventral nerve cords to attract sensory axons and muscle membrane extensions called muscle arms. In parallel with unc-6 and slt-1, involved in the netrin receptor unc-40 dependent guidance of the AVM and PVM mechanosensory axons along the dorsal-ventral axis. The unc-40 coreceptor eva-1 is enhancing the responsiveness of unc-40 to the madd-4 guidance cue to attract the muscle arm extensions and AVM mechanosensory axons towards the dorsoventral midline. Acts as a synaptic organizer and is required for the specification of inhibitory GABAergic and excitatory cholinergic identities of postsynaptic domains at neuromuscular junctions (NMJs). Required for the recruitment of unc-40 to both cholinergic and GABAergic NMJs. Promotes the clustering of ACh receptors and GABA(A) receptors at postsynaptic sites during synaptogenesis. The binding to the presynaptic adhesion protein nrx-1 and to the neuroligin nlg-1 at postsynaptic sites promotes clustering of GABAergic receptors at postsynaptic NMJs, thereby contributing to normal GABAergic synaptic transmission. Its function is as follows. Isoform a and isoform c: Promotes the clustering of acetylcholine receptors (AChR) at excitatory cholinergic synapses of NMJs via the netrin receptor unc-40. Functionally, acts as a guidance cue in the attraction of muscle membrane extensions (muscle arms) to the dorsal cord and in cooperation with unc-6 to the ventral cord via the netrin receptor unc-40 and via the unc-40 coreceptor eva-1. Together with nrx-1, clusters netrin receptor unc-40 and neuroligin nlg-1 at postsynaptic sites of GABAergic NMJs, thereby promoting the recruitment of GABA(A) receptors at GABAergic synapses. Prevents the recruitment of GABAergic receptors to cholinergic synapses. This is Protein madd-4 from Caenorhabditis elegans.